Here is a 239-residue protein sequence, read N- to C-terminus: Nicotinamide riboside transporter PnuC (239 aa).

The Cytoplasmic segment spans residues 1 to 21; it reads MDFFSVQNILVHIPIGAGGYD. A helical membrane pass occupies residues 22 to 42; it reads LSWIEAVGTIAGLLCIGLASL. Over 43 to 48 the chain is Periplasmic; it reads EKISNY. A helical membrane pass occupies residues 49 to 68; the sequence is FFGLINVTLFGIIFFQIQLY. Topologically, residues 69–71 are cytoplasmic; the sequence is ASL. Residues 72–89 traverse the membrane as a helical segment; that stretch reads LLQVFFFAANIYGWYAWS. Over 90–109 the chain is Periplasmic; sequence RQTSQNEAELKIRWLPLPKA. A helical transmembrane segment spans residues 110 to 127; it reads LSWLAVCVVSIGLMTVFI. At 128–157 the chain is on the cytoplasmic side; that stretch reads NPVFAFLTRVAVMIMQALGLQVVMPELQPD. A helical membrane pass occupies residues 158-177; that stretch reads AFPFWDSCMMVLSIVAMILM. Over 178 to 183 the chain is Periplasmic; it reads TRKYVE. A helical membrane pass occupies residues 184–206; the sequence is NWLLWVIINVISVVIFALQGVYA. Positions 188 and 192 each coordinate beta-nicotinamide D-riboside. At 207 to 239 the chain is on the cytoplasmic side; the sequence is MSLEYIILTFIALNGSRMWINSARERGSRALSH.

It belongs to the nicotinamide ribonucleoside (NR) uptake permease (TC 4.B.1) family.

The protein localises to the cell inner membrane. Functionally, required for nicotinamide riboside transport across the inner membrane. This chain is Nicotinamide riboside transporter PnuC (pnuC), found in Escherichia coli (strain K12).